A 442-amino-acid polypeptide reads, in one-letter code: Casein kinase 1-like protein 10 (442 aa).

The Protein kinase domain maps to 9–278 (FKLGRKIGSG…LKRLFRDLFI (270 aa)). Residues 15 to 23 (IGSGSFGEL) and K38 each bind ATP. D128 serves as the catalytic Proton acceptor. Disordered regions lie at residues 299-323 (GSIS…ERNE) and 381-421 (AVMS…LSAR). Residues 305–317 (RPNPKPALDPPGP) show a composition bias toward pro residues. Over residues 384–394 (SSSQPGSSGEL) the composition is skewed to low complexity. Polar residues predominate over residues 400-417 (SKLFSSSAQKIQPVQETK).

It belongs to the protein kinase superfamily. CK1 Ser/Thr protein kinase family. Casein kinase I subfamily. Monomer. Autophosphorylated.

Its subcellular location is the cytoplasm. The protein resides in the cell junction. It is found in the plasmodesma. It carries out the reaction L-seryl-[protein] + ATP = O-phospho-L-seryl-[protein] + ADP + H(+). The catalysed reaction is L-threonyl-[protein] + ATP = O-phospho-L-threonyl-[protein] + ADP + H(+). Its function is as follows. Casein kinases are operationally defined by their preferential utilization of acidic proteins such as caseins as substrates. It can phosphorylate a large number of proteins. The chain is Casein kinase 1-like protein 10 from Arabidopsis thaliana (Mouse-ear cress).